A 447-amino-acid chain; its full sequence is Chorismate synthase, chloroplastic (447 aa).

The disordered stretch occupies residues 1–24; sequence MASSLSTKPFLSGSRRRSTTDGSG. Residues 1 to 57 constitute a chloroplast transit peptide; sequence MASSLSTKPFLSGSRRRSTTDGSGWSYFQTSDLRQLSNQSVQISVRRQTAPLKLVVQ.

This sequence belongs to the chorismate synthase family. Homotetramer. It depends on FMNH2 as a cofactor. The N-terminus is blocked.

It is found in the plastid. It localises to the chloroplast. The catalysed reaction is 5-O-(1-carboxyvinyl)-3-phosphoshikimate = chorismate + phosphate. It participates in metabolic intermediate biosynthesis; chorismate biosynthesis; chorismate from D-erythrose 4-phosphate and phosphoenolpyruvate: step 7/7. Its function is as follows. Catalyzes the last common step of the biosynthesis of aromatic amino acids, produced via the shikimic acid pathway. In Capnoides sempervirens (Rock-harlequin), this protein is Chorismate synthase, chloroplastic.